We begin with the raw amino-acid sequence, 593 residues long: Arginine--tRNA ligase (593 aa).

The 'HIGH' region signature appears at 138–148; the sequence is ANPTGPLHVGH.

Belongs to the class-I aminoacyl-tRNA synthetase family. Monomer.

The protein localises to the cytoplasm. The enzyme catalyses tRNA(Arg) + L-arginine + ATP = L-arginyl-tRNA(Arg) + AMP + diphosphate. In Burkholderia orbicola (strain MC0-3), this protein is Arginine--tRNA ligase.